A 113-amino-acid polypeptide reads, in one-letter code: Transcription initiation factor IIA subunit 2 (113 aa).

It belongs to the TFIIA subunit 2 family. In terms of assembly, TFIIA is a heterodimer of the large unprocessed subunit 1 and a small subunit gamma. It was originally believed to be a heterotrimer of an alpha, a beta and a gamma subunit.

The protein localises to the nucleus. Functionally, TFIIA is a component of the transcription machinery of RNA polymerase II and plays an important role in transcriptional activation. TFIIA in a complex with TBP mediates transcriptional activity. This is Transcription initiation factor IIA subunit 2 from Caenorhabditis elegans.